The following is a 186-amino-acid chain: Probable chorismate pyruvate-lyase (186 aa).

3 residues coordinate substrate: R80, L118, and E170.

This sequence belongs to the UbiC family.

It is found in the cytoplasm. It catalyses the reaction chorismate = 4-hydroxybenzoate + pyruvate. It functions in the pathway cofactor biosynthesis; ubiquinone biosynthesis. Its function is as follows. Removes the pyruvyl group from chorismate, with concomitant aromatization of the ring, to provide 4-hydroxybenzoate (4HB) for the ubiquinone pathway. The protein is Probable chorismate pyruvate-lyase of Pseudomonas savastanoi pv. phaseolicola (strain 1448A / Race 6) (Pseudomonas syringae pv. phaseolicola (strain 1448A / Race 6)).